A 441-amino-acid polypeptide reads, in one-letter code: Probable carboxypeptidase NFIA_052450 (441 aa).

The signal sequence occupies residues 1 to 16 (MKPLSSLLLSAALSAA). Asn-88 and Asn-150 each carry an N-linked (GlcNAc...) asparagine glycan. Asp-166 provides a ligand contact to Zn(2+). Residue Glu-198 is the Proton acceptor of the active site. Glu-199 is a binding site for Zn(2+). Residues Asn-354 and Asn-373 are each glycosylated (N-linked (GlcNAc...) asparagine).

This sequence belongs to the peptidase M20A family. The cofactor is Zn(2+).

The protein localises to the secreted. This is Probable carboxypeptidase NFIA_052450 from Neosartorya fischeri (strain ATCC 1020 / DSM 3700 / CBS 544.65 / FGSC A1164 / JCM 1740 / NRRL 181 / WB 181) (Aspergillus fischerianus).